The sequence spans 1353 residues: Inhibitor of Bruton tyrosine kinase (1353 aa).

ANK repeat units follow at residues 51–80 and 85–114; these read FGRN…DLLV and SGWT…SLYI. RCC1 repeat units lie at residues 141–194, 195–246, and 248–301; these read PTDV…FLSQ, KGQV…VLTE, and GCVY…LWTR. BTB domains follow at residues 564-644 and 768-836; these read HDVT…DFLT and CDVT…VVIK. One copy of the ANK 3 repeat lies at 806-835; it reads SSCAALEMPIHSDILKVILDYLYTDEAVVI. The tract at residues 970–1001 is disordered; the sequence is HSETMFKKAKTKAKKKPRKRSDSSGGYNLSDI. Positions 976–988 are enriched in basic residues; that stretch reads KKAKTKAKKKPRK. Ser-990 is subject to Phosphoserine. Residues 992-1001 show a composition bias toward polar residues; the sequence is SSGGYNLSDI. Phosphoserine occurs at positions 1004, 1030, 1033, 1039, 1045, 1054, 1083, 1111, 1113, and 1116. Residues 1134 to 1155 form a disordered region; the sequence is KCGATPKSHLGKTVSHGVKLSQ.

Interacts with the PH domain of BTK. Isoform 2 does not interact with BTK. As to expression, expressed in DeFew, HEK293T, HeLa and in Jurkat, MC3 and NB4 lymphoid cells (at protein level). Isoform 1 is the predominant isoform expressed in all examined tissues and cell lines. Highly expressed in hemopoietic tissues (fetal liver, spleen, lymph node, thymus, peripheral blood leukocytes and bone marrow). Weakly or not expressed in other tissues.

The protein resides in the cytoplasm. Its subcellular location is the membrane. The protein localises to the nucleus. Functionally, acts as an inhibitor of BTK tyrosine kinase activity, thereby playing a role in B-cell development. Down-regulates BTK kinase activity, leading to interference with BTK-mediated calcium mobilization and NF-kappa-B-driven transcription. The polypeptide is Inhibitor of Bruton tyrosine kinase (IBTK) (Homo sapiens (Human)).